The sequence spans 140 residues: Nucleoside diphosphate kinase (140 aa).

6 residues coordinate ATP: lysine 11, phenylalanine 59, arginine 87, threonine 93, arginine 104, and asparagine 114. Histidine 117 functions as the Pros-phosphohistidine intermediate in the catalytic mechanism.

It belongs to the NDK family. In terms of assembly, homotetramer. It depends on Mg(2+) as a cofactor.

The protein localises to the cytoplasm. The enzyme catalyses a 2'-deoxyribonucleoside 5'-diphosphate + ATP = a 2'-deoxyribonucleoside 5'-triphosphate + ADP. It carries out the reaction a ribonucleoside 5'-diphosphate + ATP = a ribonucleoside 5'-triphosphate + ADP. Functionally, major role in the synthesis of nucleoside triphosphates other than ATP. The ATP gamma phosphate is transferred to the NDP beta phosphate via a ping-pong mechanism, using a phosphorylated active-site intermediate. The chain is Nucleoside diphosphate kinase from Methylobacterium sp. (strain 4-46).